We begin with the raw amino-acid sequence, 1258 residues long: Ice nucleation protein (1258 aa).

An octapeptide periodicity region spans residues 162–1217 (ATYGSTLSGT…LTAGENSVLI (1056 aa)). Disordered regions lie at residues 260–287 (YGST…KGSD), 311–342 (TQTA…GYGS), 356–383 (YGST…KGSD), 407–438 (TQTA…GYGS), and 452–480 (YGST…GSDL). Composition is skewed to polar residues over residues 261–286 (GSTQ…QKGS), 311–334 (TQTA…QKGS), 357–382 (GSTQ…QKGS), 407–430 (TQTA…QKGS), and 453–480 (GSTQ…GSDL).

This sequence belongs to the bacterial ice nucleation protein family.

The protein resides in the cell outer membrane. Its function is as follows. Ice nucleation proteins enable bacteria to nucleate crystallization in supercooled water. The sequence is that of Ice nucleation protein (iceE) from Enterobacter agglomerans (Erwinia herbicola).